We begin with the raw amino-acid sequence, 155 residues long: dCTP deaminase (155 aa).

DCTP is bound by residues 79–84 (RSSLAR), aspartate 95, glutamine 124, and tyrosine 138.

Belongs to the dCTP deaminase family. Homotrimer.

It catalyses the reaction dCTP + H2O + H(+) = dUTP + NH4(+). Its pathway is pyrimidine metabolism; dUMP biosynthesis; dUMP from dCTP (dUTP route): step 1/2. Functionally, catalyzes the deamination of dCTP to dUTP. The polypeptide is dCTP deaminase (Thermococcus kodakarensis (strain ATCC BAA-918 / JCM 12380 / KOD1) (Pyrococcus kodakaraensis (strain KOD1))).